The primary structure comprises 99 residues: MNSVTKISTLLIVILSFLCFVEGLICNSCEKSRDSRCTMSQSRCVAKPGESCSTVSHFVGTKHVYSKQMCSPQCKEKQLNTGKKLIYIMCCEKNLCNSF.

The first 23 residues, 1–23 (MNSVTKISTLLIVILSFLCFVEG), serve as a signal peptide directing secretion. Residues 24 to 99 (LICNSCEKSR…CCEKNLCNSF (76 aa)) form the UPAR/Ly6 domain. 4 disulfide bridges follow: Cys-26/Cys-52, Cys-29/Cys-37, Cys-44/Cys-70, and Cys-74/Cys-90.

As to expression, expressed in prostate, testis, eye, kidney and skeletal muscle. Expressed in the dorsal lobe of prostate. Not expressed in the ventral lobe of prostate.

It is found in the secreted. Functionally, enhances sperm motility. Binds to calmodulin and inhibits calcium transport into spermatozoa. May modulate the function of nicotinic acetylcholine receptors. This Mus musculus (Mouse) protein is Prostate and testis expressed protein 4 (Pate4).